The chain runs to 533 residues: Drimenyl diphosphate synthase (533 aa).

Residues Arg-132, Lys-133, Gln-163, and Trp-165 each contribute to the (2E,6E)-farnesyl diphosphate site. A Mg(2+)-binding site is contributed by Glu-169. PFTB repeat units lie at residues 274-316 (VTPM…RRAA), 324-366 (VAEA…AHDP), 372-415 (VDEA…AAHG), 425-466 (AERA…ARGP), and 474-517 (LDRA…FVLL). Asp-303 serves as the catalytic Proton donor. (2E,6E)-farnesyl diphosphate is bound at residue Arg-501.

Belongs to the terpene cyclase/mutase family. Requires Mg(2+) as cofactor. It depends on Ni(2+) as a cofactor. Co(2+) is required as a cofactor.

The enzyme catalyses (2E,6E)-farnesyl diphosphate = (5S,9S,10S)-drim-7-en-11-yl diphosphate. Functionally, catalyzes the cyclization of farnesyl diphosphate (FPP) to drimenyl diphosphate. Cannot use geranylgeranyl diphosphate (GGPP) as substrate. This Streptomyces showdoensis protein is Drimenyl diphosphate synthase.